Reading from the N-terminus, the 689-residue chain is Probable E3 ubiquitin ligase complex SCF subunit sconB (689 aa).

Basic and acidic residues-rich tracts occupy residues 1-12 and 19-29; these read MDAHELSFRDGH and MKDECASEEKA. Positions 1–66 are disordered; the sequence is MDAHELSFRD…STQDKPHSFN (66 aa). The 47-residue stretch at 186–232 folds into the F-box domain; that stretch reads IDFLTALPPEISFKILCYLDTTSLCKAAQVSRRWRALADDDVVWHRM. Residues 267–306 form a disordered region; that stretch reads AATWDVSEQPAETESNSATIDTAASGSKRKPESDKEDTAM. Residues 276–291 are compositionally biased toward polar residues; that stretch reads PAETESNSATIDTAAS. Basic and acidic residues predominate over residues 295-306; the sequence is RKPESDKEDTAM. 7 WD repeats span residues 358–395, 398–437, 439–475, 477–518, 572–615, 616–655, and 658–689; these read GHSNGIMCLQFEDNILATGSYDATIKIWDTETGEELRT, GHRSGIRCLQFDDTKLISGSMDHTLKVWNWRTGECISTYS, HRGGVVGLHFDATILASGSVDKTVKIWNFEDKSTCLL, GHTD…RTFH, DTPS…CLRT, FFGHLEGVWALAADTLRIVSGAEDRMVKIWDPRTGKCERT, and GHSGPVTCIGLGDSRFATGSEDCEVRMYSFQT.

It belongs to the WD repeat MET30/SCONB/SCON-2 family. As to quaternary structure, component of the SCF(sconB) E3 ubiquitin ligase complex.

The protein operates within protein modification; protein ubiquitination. Functionally, component of the SCF(sconB) E3 ubiquitin ligase complex involved in the regulation of sulfur metabolite repression, probably by mediating the inactivation or degradation of the metR transcription factor. The polypeptide is Probable E3 ubiquitin ligase complex SCF subunit sconB (sconB) (Neosartorya fischeri (strain ATCC 1020 / DSM 3700 / CBS 544.65 / FGSC A1164 / JCM 1740 / NRRL 181 / WB 181) (Aspergillus fischerianus)).